Consider the following 717-residue polypeptide: Fatty acid oxidation complex subunit alpha (717 aa).

The tract at residues 1–189 (MIYQSPTIEV…KVGAIDAVVA (189 aa)) is enoyl-CoA hydratase/isomerase. Substrate is bound at residue Asp296. The 3-hydroxyacyl-CoA dehydrogenase stretch occupies residues 311–717 (KKVNSAAVLG…ANNGSYYQQA (407 aa)). NAD(+) contacts are provided by residues Met324, Asp343, 400 to 402 (VVE), Lys407, and Ser429. Residue His450 is the For 3-hydroxyacyl-CoA dehydrogenase activity of the active site. Position 453 (Asn453) interacts with NAD(+). Substrate contacts are provided by Asn500 and Tyr660.

In the N-terminal section; belongs to the enoyl-CoA hydratase/isomerase family. It in the C-terminal section; belongs to the 3-hydroxyacyl-CoA dehydrogenase family. In terms of assembly, heterotetramer of two alpha chains (FadB) and two beta chains (FadA).

It catalyses the reaction a (3S)-3-hydroxyacyl-CoA + NAD(+) = a 3-oxoacyl-CoA + NADH + H(+). The catalysed reaction is a (3S)-3-hydroxyacyl-CoA = a (2E)-enoyl-CoA + H2O. It carries out the reaction a 4-saturated-(3S)-3-hydroxyacyl-CoA = a (3E)-enoyl-CoA + H2O. The enzyme catalyses (3S)-3-hydroxybutanoyl-CoA = (3R)-3-hydroxybutanoyl-CoA. It catalyses the reaction a (3Z)-enoyl-CoA = a 4-saturated (2E)-enoyl-CoA. The catalysed reaction is a (3E)-enoyl-CoA = a 4-saturated (2E)-enoyl-CoA. It functions in the pathway lipid metabolism; fatty acid beta-oxidation. Functionally, involved in the aerobic and anaerobic degradation of long-chain fatty acids via beta-oxidation cycle. Catalyzes the formation of 3-oxoacyl-CoA from enoyl-CoA via L-3-hydroxyacyl-CoA. It can also use D-3-hydroxyacyl-CoA and cis-3-enoyl-CoA as substrate. The protein is Fatty acid oxidation complex subunit alpha of Shewanella pealeana (strain ATCC 700345 / ANG-SQ1).